A 671-amino-acid chain; its full sequence is DNA ligase (671 aa).

Residues 32–36, 81–82, and Glu113 contribute to the NAD(+) site; these read DAEYD and SL. Lys115 acts as the N6-AMP-lysine intermediate in catalysis. Positions 136, 173, 290, and 314 each coordinate NAD(+). Positions 408, 411, 426, and 432 each coordinate Zn(2+). A BRCT domain is found at 593–671; the sequence is EIDSPFAGKT…ETEMLRLLGS (79 aa).

Belongs to the NAD-dependent DNA ligase family. LigA subfamily. It depends on Mg(2+) as a cofactor. Mn(2+) is required as a cofactor.

The catalysed reaction is NAD(+) + (deoxyribonucleotide)n-3'-hydroxyl + 5'-phospho-(deoxyribonucleotide)m = (deoxyribonucleotide)n+m + AMP + beta-nicotinamide D-nucleotide.. Its function is as follows. DNA ligase that catalyzes the formation of phosphodiester linkages between 5'-phosphoryl and 3'-hydroxyl groups in double-stranded DNA using NAD as a coenzyme and as the energy source for the reaction. It is essential for DNA replication and repair of damaged DNA. This chain is DNA ligase, found in Escherichia coli O127:H6 (strain E2348/69 / EPEC).